The sequence spans 438 residues: 5-methylthioadenosine/S-adenosylhomocysteine deaminase (438 aa).

2 residues coordinate Zn(2+): His-71 and His-73. The substrate site is built by Glu-100 and His-192. His-219 is a Zn(2+) binding site. Substrate contacts are provided by Glu-222 and Asp-307. Asp-307 is a binding site for Zn(2+).

This sequence belongs to the metallo-dependent hydrolases superfamily. MTA/SAH deaminase family. Requires Zn(2+) as cofactor.

It catalyses the reaction S-adenosyl-L-homocysteine + H2O + H(+) = S-inosyl-L-homocysteine + NH4(+). It carries out the reaction S-methyl-5'-thioadenosine + H2O + H(+) = S-methyl-5'-thioinosine + NH4(+). Catalyzes the deamination of 5-methylthioadenosine and S-adenosyl-L-homocysteine into 5-methylthioinosine and S-inosyl-L-homocysteine, respectively. Is also able to deaminate adenosine. This is 5-methylthioadenosine/S-adenosylhomocysteine deaminase from Syntrophobacter fumaroxidans (strain DSM 10017 / MPOB).